A 143-amino-acid chain; its full sequence is Transcriptional regulator MraZ (143 aa).

2 consecutive SpoVT-AbrB domains span residues 5 to 47 and 76 to 119; these read TYTP…PRAE and TDEQ…DAAA.

This sequence belongs to the MraZ family. Forms oligomers.

It localises to the cytoplasm. Its subcellular location is the nucleoid. This chain is Transcriptional regulator MraZ, found in Mycobacterium sp. (strain JLS).